Here is a 67-residue protein sequence, read N- to C-terminus: MDPKLLDILVCPVTKTPLQLDKAQQELISTAANLAFPVRDGIPIMLEEEARTLTAEEKERFMKQKRG.

The protein belongs to the UPF0434 family.

In Hydrogenovibrio crunogenus (strain DSM 25203 / XCL-2) (Thiomicrospira crunogena), this protein is UPF0434 protein Tcr_0959.